Consider the following 241-residue polypeptide: MAKQVENNNNDHLVQSTDPEHPSNLIPELCRKFYNWGWVTGTGGGTSIRRDDHIFIAPSGVQKELMKPENIFVLQFPTPKYPPSERKYIRKPLDLKPSACTPLFLAAFERGAGCCIHTHSQWAVLVTLLVEREKGPGGYFEISNIEQIKGIPRGKGKGMLGFFDTLRIPIIENTAFEEDLTGSLEKAMEENPDTCAVLVRRHGIYVWGDNVAKAKTQCESLDYLFQLAVEMHKLGIPWVKE.

Positions 1–17 (MAKQVENNNNDHLVQST) are enriched in polar residues. Residues 1-21 (MAKQVENNNNDHLVQSTDPEH) form a disordered region. Cys-100 serves as a coordination point for substrate. The Zn(2+) site is built by His-117 and His-119. The Proton donor/acceptor role is filled by Glu-146. His-202 serves as a coordination point for Zn(2+).

This sequence belongs to the aldolase class II family. MtnB subfamily. Zn(2+) is required as a cofactor.

Its subcellular location is the cytoplasm. It carries out the reaction 5-(methylsulfanyl)-D-ribulose 1-phosphate = 5-methylsulfanyl-2,3-dioxopentyl phosphate + H2O. It functions in the pathway amino-acid biosynthesis; L-methionine biosynthesis via salvage pathway; L-methionine from S-methyl-5-thio-alpha-D-ribose 1-phosphate: step 2/6. In terms of biological role, catalyzes the dehydration of methylthioribulose-1-phosphate (MTRu-1-P) into 2,3-diketo-5-methylthiopentyl-1-phosphate (DK-MTP-1-P). The sequence is that of Methylthioribulose-1-phosphate dehydratase from Aspergillus flavus (strain ATCC 200026 / FGSC A1120 / IAM 13836 / NRRL 3357 / JCM 12722 / SRRC 167).